Reading from the N-terminus, the 477-residue chain is MGPQAAAGRMILLVVLMLSAKVGSGALTSTEDPEPPSVPVPTNVLIKSYNLNPVVCWEYQNMSQTPIFTVQVKVYSGSWTDSCTNISDHCCNIYEQIMYPDVSAWARVKAKVGQKESDYARSKEFLMCLKGKVGPPGLEIRRKKEEQLSVLVFHPEVVVNGESQGTMFGDGSTCYTFDYTVYVEHNRSGEILHTKHTVEKEECNETLCELNISVSTLDSRYCISVDGISSFWQVRTEKSKDVCIPPFHDDRKDSIWILVVAPLTVFTVVILVFAYWYTKKNSFKRKSIMLPKSLLSVVKSATLETKPESKYSLVTPHQPAVLESETVICEEPLSTVTAPDSPEAAEQEELSKETKALEAGGSTSAMTPDSPPTPTQRRSFSLLSSNQSGPCSLTAYHSRNGSDSGLVGSGSSISDLESLPNNNSETKMAEHDPPPVRKAPMASGYDKPHMLVDVLVDVGGKESLMGYRLTGEAQELS.

An N-terminal signal peptide occupies residues 1–25 (MGPQAAAGRMILLVVLMLSAKVGSG). At 26 to 254 (ALTSTEDPEP…PPFHDDRKDS (229 aa)) the chain is on the extracellular side. N-linked (GlcNAc...) asparagine glycosylation is found at N61 and N85. 4 cysteine pairs are disulfide-bonded: C83/C91, C128/C174, C203/C208, and C222/C243. The helical transmembrane segment at 255–275 (IWILVVAPLTVFTVVILVFAY) threads the bilayer. The Cytoplasmic portion of the chain corresponds to 276 to 477 (WYTKKNSFKR…RLTGEAQELS (202 aa)). Disordered regions lie at residues 335 to 386 (TVTA…LSSN) and 402 to 446 (SDSG…SGYD). S362 is subject to Phosphoserine. At T367 the chain carries Phosphothreonine. The residue at position 370 (S370) is a Phosphoserine. Phosphothreonine occurs at positions 373 and 375. A compositionally biased stretch (polar residues) spans 375-386 (TQRRSFSLLSSN). S379 and S402 each carry phosphoserine. Over residues 402 to 416 (SDSGLVGSGSSISDL) the composition is skewed to low complexity. A Phosphotyrosine modification is found at Y445.

The protein belongs to the type II cytokine receptor family. In terms of assembly, monomer. Heterodimer with IFNGR2, to form the IFNG receptor complex. Interacts with JAK1. Interacts (when phosphorylated) with STAT1. Interacts with SOCS1. In terms of processing, phosphorylated at Ser/Thr residues. Phosphorylation of Tyr-445 is required for IFNG receptor signal transduction. Influenza virus infection leads to phosphorylation in a CSNK1A1-dependent manner. Ubiquitinated after phosphorylation in a CSNK1A1-dependent manner, leading to the lysosome-dependent degradation. Proteasomally degraded through 'Lys-48'-mediated ubiquitination. Ubiquitination is necessary for efficient IFNGR1 signaling.

It localises to the cell membrane. Its function is as follows. Receptor subunit for interferon gamma/INFG that plays crucial roles in antimicrobial, antiviral, and antitumor responses by activating effector immune cells and enhancing antigen presentation (, PubMed:20926559, PubMed:27286456). Associates with transmembrane accessory factor IFNGR2 to form a functional receptor. Upon ligand binding, the intracellular domain of IFNGR1 opens out to allow association of downstream signaling components JAK1 and JAK2. In turn, activated JAK1 phosphorylates IFNGR1 to form a docking site for STAT1. Subsequent phosphorylation of STAT1 leads to its dimerization, translocation to the nucleus, and stimulation of target gene transcription. STAT3 can also be activated in a similar manner although activation seems weaker. IFNGR1 intracellular domain phosphorylation also provides a docking site for SOCS1 that regulates the JAK-STAT pathway by competing with STAT1 binding to IFNGR1. The sequence is that of Interferon gamma receptor 1 from Mus musculus (Mouse).